Here is a 513-residue protein sequence, read N- to C-terminus: Flavonoid 3'-monooxygenase (513 aa).

Residues 1-21 traverse the membrane as a helical segment; it reads MATLFLTILLATVLFLILRIF. The Cytoplasmic portion of the chain corresponds to 22–513; it reads SHRRNRSHNN…APNVYGLGSG (492 aa). Cys445 provides a ligand contact to heme.

It belongs to the cytochrome P450 family. Heme is required as a cofactor. In terms of tissue distribution, high expression in siliques and to a lower extent in stems, flowers and senescing leaves.

It localises to the endoplasmic reticulum membrane. It carries out the reaction a 3'-unsubstituted flavone + reduced [NADPH--hemoprotein reductase] + O2 = a 3'-hydroxyflavone + oxidized [NADPH--hemoprotein reductase] + H2O + H(+). It functions in the pathway secondary metabolite biosynthesis; flavonoid biosynthesis. In terms of biological role, catalyzes the 3'-hydroxylation of the flavonoid B-ring to the 3',4'-hydroxylated state. Convert naringenin to eriodictyol and dihydrokaempferol to dihydroquercetin. This is Flavonoid 3'-monooxygenase (CYP75B1) from Arabidopsis thaliana (Mouse-ear cress).